Here is a 456-residue protein sequence, read N- to C-terminus: Glycerol-3-phosphate acyltransferase 4 (456 aa).

An N-terminal signal peptide occupies residues 1–37 (MFLLLPFDSLIVNLLGISLTVLFTLLLVFIIVPAIFG). The next 2 membrane-spanning stretches (helical) occupy residues 156–176 (ISLRLTVLWGLGVLIRYCFLL) and 180–200 (IALAFTGISLLVVGTTVVGYL). An N-linked (GlcNAc...) asparagine glycan is attached at Asn247. An HXXXXD motif motif is present at residues 248 to 253 (HTSPID). N-linked (GlcNAc...) asparagine glycans are attached at residues Asn327, Asn328, and Asn362.

This sequence belongs to the 1-acyl-sn-glycerol-3-phosphate acyltransferase family. As to expression, ubiquitous. High levels in testis. Relatively high level of expression in skeletal muscle and heart. Relatively low level of expression in lung.

The protein localises to the endoplasmic reticulum membrane. The catalysed reaction is sn-glycerol 3-phosphate + an acyl-CoA = a 1-acyl-sn-glycero-3-phosphate + CoA. It carries out the reaction dodecanoyl-CoA + sn-glycerol 3-phosphate = 1-dodecanoyl-sn-glycerol 3-phosphate + CoA. It catalyses the reaction sn-glycerol 3-phosphate + hexadecanoyl-CoA = 1-hexadecanoyl-sn-glycero-3-phosphate + CoA. The enzyme catalyses sn-glycerol 3-phosphate + octadecanoyl-CoA = 1-octadecanoyl-sn-glycero-3-phosphate + CoA. The catalysed reaction is sn-glycerol 3-phosphate + (9Z)-octadecenoyl-CoA = 1-(9Z-octadecenoyl)-sn-glycero-3-phosphate + CoA. It carries out the reaction (9Z,12Z)-octadecadienoyl-CoA + sn-glycerol 3-phosphate = 1-(9Z,12Z)-octadecadienoyl-sn-glycero-3-phosphate + CoA. Its pathway is phospholipid metabolism; CDP-diacylglycerol biosynthesis; CDP-diacylglycerol from sn-glycerol 3-phosphate: step 1/3. Inhibited by N-ethylmaleimide (NEM). Converts glycerol-3-phosphate to 1-acyl-sn-glycerol-3-phosphate (lysophosphatidic acid or LPA) by incorporating an acyl moiety at the sn-1 position of the glycerol backbone. Active against both saturated and unsaturated long-chain fatty acyl-CoAs. Protects cells against lipotoxicity. The chain is Glycerol-3-phosphate acyltransferase 4 from Homo sapiens (Human).